The sequence spans 240 residues: DNA repair protein RecO (240 aa).

Belongs to the RecO family.

Involved in DNA repair and RecF pathway recombination. The polypeptide is DNA repair protein RecO (Actinobacillus pleuropneumoniae serotype 5b (strain L20)).